A 212-amino-acid polypeptide reads, in one-letter code: Translation initiation factor IF-3 (212 aa).

Basic and acidic residues predominate over residues 190–203; it reads LVDKNSDSQDKSVS. Residues 190-212 form a disordered region; the sequence is LVDKNSDSQDKSVSEEDTNEGEQ.

It belongs to the IF-3 family. As to quaternary structure, monomer.

It localises to the cytoplasm. IF-3 binds to the 30S ribosomal subunit and shifts the equilibrium between 70S ribosomes and their 50S and 30S subunits in favor of the free subunits, thus enhancing the availability of 30S subunits on which protein synthesis initiation begins. This chain is Translation initiation factor IF-3, found in Mycoplasmopsis fermentans (Mycoplasma fermentans).